The chain runs to 198 residues: MSKVLYIKANIKNEGESRTFKVSDSFVEEYKKNNPEDEIITLDLYKENIDFLRADDLGKLFGPKDEESKNNSILKYAYQFADADKYIIAAPMWNLSFPAILKAYIDYVSVSGITFKYTAEGPVGLLNNKKAVHIVSRGGGYDNSPYEMGDRYLRTILGFFGIKDIETIAIDNLDVMGVNVEEKVEEGIEKAISLAKKF.

FMN-binding positions include 92–95 (MWNL) and 136–139 (SRGG).

Belongs to the azoreductase type 1 family. As to quaternary structure, homodimer. The cofactor is FMN.

The catalysed reaction is 2 a quinone + NADH + H(+) = 2 a 1,4-benzosemiquinone + NAD(+). The enzyme catalyses N,N-dimethyl-1,4-phenylenediamine + anthranilate + 2 NAD(+) = 2-(4-dimethylaminophenyl)diazenylbenzoate + 2 NADH + 2 H(+). Quinone reductase that provides resistance to thiol-specific stress caused by electrophilic quinones. Functionally, also exhibits azoreductase activity. Catalyzes the reductive cleavage of the azo bond in aromatic azo compounds to the corresponding amines. The protein is FMN-dependent NADH:quinone oxidoreductase of Clostridium perfringens (strain ATCC 13124 / DSM 756 / JCM 1290 / NCIMB 6125 / NCTC 8237 / Type A).